Consider the following 227-residue polypeptide: DNA packaging ATPase P9 (227 aa).

16–23 (GKTGTGKT) serves as a coordination point for ATP.

As to quaternary structure, heterodimer of P6 and P9; further multimerizes as hexamers of heterodimers. Part of the dodecameric portal complex that is composed of the packaging efficiency factor P6, the DNA packaging ATPase P9, and the internal heterododecamer P20/P22 which spans the virion inner membrane.

It localises to the virion. In terms of biological role, together with the packaging efficiency factor P6, forms the external part of the portal vertex that is embeded in the capsid and which plays critical roles in genome packaging and genome ejection. Both proteins multimerize as a single ring-shaped heterdodecamer arranged around a central channel. This Enterobacteria phage PRD1 (Bacteriophage PRD1) protein is DNA packaging ATPase P9 (IX).